The primary structure comprises 541 residues: Membrane protein insertase YidC (541 aa).

A helical membrane pass occupies residues 6–26 (SLLVLALIFISFLVYQQWQLD). The segment at 34-56 (EQTTSITATSDVPASSPSNSQAI) is disordered. Transmembrane regions (helical) follow at residues 337–357 (FWLL…IICV), 416–436 (LGGC…YWTF), 454–474 (LSAQ…MFLL), and 495–515 (PLIF…YWLV).

Belongs to the OXA1/ALB3/YidC family. Type 1 subfamily. As to quaternary structure, interacts with the Sec translocase complex via SecD. Specifically interacts with transmembrane segments of nascent integral membrane proteins during membrane integration.

Its subcellular location is the cell inner membrane. Required for the insertion and/or proper folding and/or complex formation of integral membrane proteins into the membrane. Involved in integration of membrane proteins that insert both dependently and independently of the Sec translocase complex, as well as at least some lipoproteins. Aids folding of multispanning membrane proteins. This chain is Membrane protein insertase YidC, found in Haemophilus influenzae (strain PittEE).